We begin with the raw amino-acid sequence, 283 residues long: MSNNRDYMICEIDEYNNIRAINNSGIYHNINEAICCMLDIVLVYKCPKEYEPLNEPVKSNKQDIGIFEVEVNPDNTFIVLSKIVINKRDLSMASLTLGEEITRKYFNLSKSRYNTISDISLELFGNNPTIQEIDNVCQEFIELSVRHFKNMIQTNQNIDNFEPDMKELARLFEPKKMHRLYYERLIQEKIIDDLTAQIRNLGYYCKISIQEFKSINPFVEPRVYLSYIAPVKIIDSYLHIVEMNSMNLEEDESKLYVLKKFCKNNDIKEYSSIYKCLLSKIQF.

This is an uncharacterized protein from Acanthamoeba polyphaga mimivirus (APMV).